The primary structure comprises 612 residues: Actin-binding LIM protein 2 (612 aa).

LIM zinc-binding domains follow at residues 22–81, 81–141, 151–210, and 210–270; these read ILCN…LYGT, TRCF…TLLG, RSCG…KFGI, and IRCD…ARTE. Zn(2+) is bound by residues Cys-83, Cys-86, His-103, Cys-106, Cys-109, Cys-112, Cys-131, and Cys-134. Zn(2+)-binding residues include Cys-212, Cys-215, His-232, Cys-235, Cys-238, Cys-241, His-260, and Cys-263. Basic and acidic residues predominate over residues 269–278; it reads TEDKSKETRT. 2 disordered regions span residues 269–295 and 341–433; these read TEDK…SGSP and AVGD…DNIY. Low complexity predominate over residues 279–295; it reads SSESIVSVPASSTSGSP. Ser-282, Ser-294, Gly-351, Arg-356, Ser-365, and Ser-368 each carry phosphoserine. Over residues 364 to 373 the composition is skewed to low complexity; sequence SSPSSAGSVS. Polar residues predominate over residues 394-416; sequence SGRSTPSLSVHSDSRPPSSTYQQ. Ser-453 carries the post-translational modification Phosphoserine. A disordered region spans residues 471–498; it reads ADTRTNSPDLDSQSLSLSSGTDQEPLQR. At Thr-473 the chain carries Phosphothreonine. 2 positions are modified to phosphoserine: Ser-477 and Ser-579. Positions 477 to 489 are enriched in low complexity; the sequence is SPDLDSQSLSLSS. One can recognise an HP domain in the interval 544 to 612; it reads TREYKIYPYD…NDLKKKALLF (69 aa).

In terms of assembly, interacts with F-actin and ABRA. Expressed in brain. Highly expressed in caudate/putamen, moderately expressed in the olfactory bulb. In the hippocampus, expressed in the CA1, CA2 and CA3 fields. In the cerebellum, expressed in Purkinje cells.

The protein localises to the cytoplasm. Functionally, may act as scaffold protein. May stimulate ABRA activity and ABRA-dependent SRF transcriptional activity. This is Actin-binding LIM protein 2 (Ablim2) from Mus musculus (Mouse).